A 178-amino-acid chain; its full sequence is Small ribosomal subunit protein uS4 (178 aa).

Residues 104–166 (RRLQTIVYRK…PNSPMASENH (63 aa)) form the S4 RNA-binding domain. A disordered region spans residues 158 to 178 (NSPMASENHPERTAAVSEENQ).

Belongs to the universal ribosomal protein uS4 family. As to quaternary structure, part of the 30S ribosomal subunit. Contacts protein S5. The interaction surface between S4 and S5 is involved in control of translational fidelity.

Its function is as follows. One of the primary rRNA binding proteins, it binds directly to 16S rRNA where it nucleates assembly of the body of the 30S subunit. In terms of biological role, with S5 and S12 plays an important role in translational accuracy. The polypeptide is Small ribosomal subunit protein uS4 (Methanococcus maripaludis (strain C5 / ATCC BAA-1333)).